The sequence spans 228 residues: Pyridoxal phosphate homeostasis protein (228 aa).

The residue at position 35 (Lys-35) is an N6-(pyridoxal phosphate)lysine.

The protein belongs to the pyridoxal phosphate-binding protein YggS/PROSC family.

In terms of biological role, pyridoxal 5'-phosphate (PLP)-binding protein, which is involved in PLP homeostasis. In Aquifex aeolicus (strain VF5), this protein is Pyridoxal phosphate homeostasis protein.